We begin with the raw amino-acid sequence, 225 residues long: MSDSVAGDFPPDPLLASGAFISSAGDGTLDSSAKRRPIQGGIGISGSGESVRIGMANGTDQVNHQTESKSRKRAAPGDNWLPPGWRVEDKIRTSGATAGSVDKYYYEPNTGRKFRSRTEVLYYLEHGTSKRGTKKAENTYFNPDHFEGQGSNRVTRTATVPPPPPPPLDFDFKNPPDKVSWSMANAGEEGWIPNIGDVKVQDSVRRDWSTAFTFITSRNPSKVSA.

The interval 25-92 (GDGTLDSSAK…PGWRVEDKIR (68 aa)) is disordered. Positions 71–146 (RKRAAPGDNW…ENTYFNPDHF (76 aa)) constitute an MBD domain.

Homodimer and heterodimer with MBD5. Interacts with DDM1 via its MBD domain. Interacts with NTF2, RPS2C, HDA6 and AGO4. In terms of tissue distribution, expressed in rosette leaves, buds, flowers, stems, mature seeds and roots.

The protein localises to the nucleus. It is found in the chromosome. The protein resides in the nucleolus. Its function is as follows. Transcriptional regulator that binds CpG, CpNpN and CpNpG (N is A, T, or C) islands in promoters regardless the DNA methylation status. Plays probably a role in gene silencing. May associate with histone deacetylase proteins (HDAC). Required for nucleolar dominance that consist in the silencing of rRNA genes inherited from one progenitor in genetic hybrids. Recruited to rRNA genes in a DRM2-dependent manner. Maintains gene silencing by interacting with RNA binding proteins (e.g. NTF2, RPS2C, HDA6 and AGO4) and by regulating DNA methylation status. The polypeptide is Methyl-CpG-binding domain-containing protein 6 (Arabidopsis thaliana (Mouse-ear cress)).